Reading from the N-terminus, the 265-residue chain is Cytochrome c oxidase subunit 3 (265 aa).

Helical transmembrane passes span 16-36 (PWPI…VMYM), 41-61 (GGAT…FVWW), 84-104 (YGSI…FWAS), 137-157 (TPIL…ILAG), 162-182 (AVYA…FQGM), 200-220 (FYLA…FSII), and 245-265 (WHFV…WGGI).

It belongs to the cytochrome c oxidase subunit 3 family. As to quaternary structure, component of the cytochrome c oxidase (complex IV, CIV), a multisubunit enzyme composed of a catalytic core of 3 subunits and several supernumerary subunits. The complex exists as a monomer or a dimer and forms supercomplexes (SCs) in the inner mitochondrial membrane with ubiquinol-cytochrome c oxidoreductase (cytochrome b-c1 complex, complex III, CIII).

The protein resides in the mitochondrion inner membrane. The catalysed reaction is 4 Fe(II)-[cytochrome c] + O2 + 8 H(+)(in) = 4 Fe(III)-[cytochrome c] + 2 H2O + 4 H(+)(out). Its function is as follows. Component of the cytochrome c oxidase, the last enzyme in the mitochondrial electron transport chain which drives oxidative phosphorylation. The respiratory chain contains 3 multisubunit complexes succinate dehydrogenase (complex II, CII), ubiquinol-cytochrome c oxidoreductase (cytochrome b-c1 complex, complex III, CIII) and cytochrome c oxidase (complex IV, CIV), that cooperate to transfer electrons derived from NADH and succinate to molecular oxygen, creating an electrochemical gradient over the inner membrane that drives transmembrane transport and the ATP synthase. Cytochrome c oxidase is the component of the respiratory chain that catalyzes the reduction of oxygen to water. Electrons originating from reduced cytochrome c in the intermembrane space (IMS) are transferred via the dinuclear copper A center (CU(A)) of subunit 2 and heme A of subunit 1 to the active site in subunit 1, a binuclear center (BNC) formed by heme A3 and copper B (CU(B)). The BNC reduces molecular oxygen to 2 water molecules using 4 electrons from cytochrome c in the IMS and 4 protons from the mitochondrial matrix. The protein is Cytochrome c oxidase subunit 3 (COX3) of Oenothera berteroana (Bertero's evening primrose).